The sequence spans 284 residues: Tropomyosin alpha-1 chain (284 aa).

N-acetylmethionine is present on M1. Residues 1-38 (MDAIKKKMQMLKLDKENALDRAEQAEADKKAAEDRSKQ) form a disordered region. The stretch at 1–284 (MDAIKKKMQM…DHALNDMTSI (284 aa)) forms a coiled coil. Residues 12-38 (KLDKENALDRAEQAEADKKAAEDRSKQ) are compositionally biased toward basic and acidic residues. S45 is subject to Phosphoserine. The tract at residues 116–136 (AEKAADESERGMKVIESRAQK) is disordered. A phosphoserine mark is found at S174, S186, S206, and S252. Y261 bears the Phosphotyrosine mark. S271 and S283 each carry phosphoserine.

The protein belongs to the tropomyosin family. As to quaternary structure, homodimer. Heterodimer of an alpha (TPM1, TPM3 or TPM4) and a beta (TPM2) chain. Interacts with HRG (via the HRR domain); the interaction contributes to the antiangiogenic properties of the histidine/proline-rich region (HRR) of HRG. Interacts (via N-terminus) with LMOD2 (via N-terminus) and TMOD1 (via N-terminus). In terms of processing, phosphorylated at Ser-283 by DAPK1 in response to oxidative stress and this phosphorylation enhances stress fiber formation in endothelial cells.

The protein resides in the cytoplasm. It is found in the cytoskeleton. Functionally, binds to actin filaments in muscle and non-muscle cells. Plays a central role, in association with the troponin complex, in the calcium dependent regulation of vertebrate striated muscle contraction. Smooth muscle contraction is regulated by interaction with caldesmon. In non-muscle cells is implicated in stabilizing cytoskeleton actin filaments. The chain is Tropomyosin alpha-1 chain (Tpm1) from Mus musculus (Mouse).